Reading from the N-terminus, the 178-residue chain is Large ribosomal subunit protein bL25 (178 aa).

This sequence belongs to the bacterial ribosomal protein bL25 family. CTC subfamily. As to quaternary structure, part of the 50S ribosomal subunit; part of the 5S rRNA/L5/L18/L25 subcomplex. Contacts the 5S rRNA. Binds to the 5S rRNA independently of L5 and L18.

This is one of the proteins that binds to the 5S RNA in the ribosome where it forms part of the central protuberance. This Campylobacter hominis (strain ATCC BAA-381 / DSM 21671 / CCUG 45161 / LMG 19568 / NCTC 13146 / CH001A) protein is Large ribosomal subunit protein bL25.